The chain runs to 338 residues: Glycerol-3-phosphate dehydrogenase [NAD(P)+] (338 aa).

Positions 14, 15, 35, and 109 each coordinate NADPH. The sn-glycerol 3-phosphate site is built by lysine 109, glycine 138, and threonine 140. Alanine 142 is a binding site for NADPH. 5 residues coordinate sn-glycerol 3-phosphate: lysine 194, aspartate 247, serine 257, arginine 258, and asparagine 259. Lysine 194 serves as the catalytic Proton acceptor. NADPH is bound at residue arginine 258. Valine 282 and glutamate 284 together coordinate NADPH.

It belongs to the NAD-dependent glycerol-3-phosphate dehydrogenase family.

It is found in the cytoplasm. The enzyme catalyses sn-glycerol 3-phosphate + NAD(+) = dihydroxyacetone phosphate + NADH + H(+). It catalyses the reaction sn-glycerol 3-phosphate + NADP(+) = dihydroxyacetone phosphate + NADPH + H(+). It functions in the pathway membrane lipid metabolism; glycerophospholipid metabolism. Functionally, catalyzes the reduction of the glycolytic intermediate dihydroxyacetone phosphate (DHAP) to sn-glycerol 3-phosphate (G3P), the key precursor for phospholipid synthesis. In Shewanella oneidensis (strain ATCC 700550 / JCM 31522 / CIP 106686 / LMG 19005 / NCIMB 14063 / MR-1), this protein is Glycerol-3-phosphate dehydrogenase [NAD(P)+].